Reading from the N-terminus, the 257-residue chain is Homeobox protein goosecoid (257 aa).

Residues 160 to 219 constitute a DNA-binding region (homeobox); it reads KRRHRTIFTDEQLEALENLFQETKYPDVGTREQLARKVHLREEKVEVWFKNRRAKWRRQK. The disordered stretch occupies residues 213–257; sequence AKWRRQKRSSSEESENAEKWNKTSSSKASPEKREEEGKSDLDSDS. Residues 241–257 show a composition bias toward basic and acidic residues; sequence SPEKREEEGKSDLDSDS.

This sequence belongs to the paired homeobox family. Bicoid subfamily.

It localises to the nucleus. Regulates chordin (CHRD). May play a role in spatial programing within discrete embryonic fields or lineage compartments during organogenesis. In concert with NKX3-2, plays a role in defining the structural components of the middle ear; required for the development of the entire tympanic ring. Probably involved in the regulatory networks that define neural crest cell fate specification and determine mesoderm cell lineages in mammals. The polypeptide is Homeobox protein goosecoid (GSC) (Saguinus labiatus (Red-chested mustached tamarin)).